Reading from the N-terminus, the 150-residue chain is Large ribosomal subunit protein uL13 (150 aa).

Belongs to the universal ribosomal protein uL13 family. As to quaternary structure, part of the 50S ribosomal subunit.

Its function is as follows. This protein is one of the early assembly proteins of the 50S ribosomal subunit, although it is not seen to bind rRNA by itself. It is important during the early stages of 50S assembly. This chain is Large ribosomal subunit protein uL13, found in Sulfurihydrogenibium sp. (strain YO3AOP1).